The primary structure comprises 317 residues: Acetyl-coenzyme A carboxylase carboxyl transferase subunit alpha (317 aa).

One can recognise a CoA carboxyltransferase C-terminal domain in the interval 39 to 293 (KLEAKAQKAL…KEAVVEALGA (255 aa)).

The protein belongs to the AccA family. Acetyl-CoA carboxylase is a heterohexamer composed of biotin carboxyl carrier protein (AccB), biotin carboxylase (AccC) and two subunits each of ACCase subunit alpha (AccA) and ACCase subunit beta (AccD).

It localises to the cytoplasm. The enzyme catalyses N(6)-carboxybiotinyl-L-lysyl-[protein] + acetyl-CoA = N(6)-biotinyl-L-lysyl-[protein] + malonyl-CoA. It functions in the pathway lipid metabolism; malonyl-CoA biosynthesis; malonyl-CoA from acetyl-CoA: step 1/1. Its function is as follows. Component of the acetyl coenzyme A carboxylase (ACC) complex. First, biotin carboxylase catalyzes the carboxylation of biotin on its carrier protein (BCCP) and then the CO(2) group is transferred by the carboxyltransferase to acetyl-CoA to form malonyl-CoA. The polypeptide is Acetyl-coenzyme A carboxylase carboxyl transferase subunit alpha (Beijerinckia indica subsp. indica (strain ATCC 9039 / DSM 1715 / NCIMB 8712)).